We begin with the raw amino-acid sequence, 401 residues long: Na(+)/H(+) antiporter NhaA 2 (401 aa).

11 consecutive transmembrane segments (helical) span residues 13-33 (AAGG…ANSP), 59-79 (LLLW…GLEV), 94-114 (ITLP…IYVW), 125-145 (GWAI…TIFG), 154-174 (LFLL…IALF), 178-198 (DLST…FLLN), 209-229 (VLIG…ATLA), 260-280 (WVGF…SLFG), 292-312 (LGIA…VCWI), 332-352 (GVSL…SLAF), and 363-383 (VKAG…VLLA).

This sequence belongs to the NhaA Na(+)/H(+) (TC 2.A.33) antiporter family.

It is found in the cell inner membrane. The enzyme catalyses Na(+)(in) + 2 H(+)(out) = Na(+)(out) + 2 H(+)(in). In terms of biological role, na(+)/H(+) antiporter that extrudes sodium in exchange for external protons. This is Na(+)/H(+) antiporter NhaA 2 from Pseudoalteromonas atlantica (strain T6c / ATCC BAA-1087).